The sequence spans 551 residues: Structure-specific endonuclease subunit MUS81 (551 aa).

Disordered stretches follow at residues 85–131 (LASG…AGYW) and 231–255 (PEEHHEESPVPEAILSEPGTTEVGV). Ser-95 carries the phosphoserine modification. Polar residues predominate over residues 110-131 (VQGSSMPVPTQPQAGSTNAGYW). Positions 124-243 (GSTNAGYWPA…HHEESPVPEA (120 aa)) are interaction with BLM. Positions 131–230 (WPAQNSGARE…GLSTLNTAFQ (100 aa)) are winged helix domain (WHD); critical for endonuclease activity. In terms of domain architecture, ERCC4 spans 270–372 (LLCVDIGETR…HRIYLVEEHG (103 aa)). Residues Asp-274, Glu-277, and Asp-307 contribute to the active site. Residues Asp-274, Glu-277, Asp-307, Glu-333, and Arg-334 each contribute to the Mg(2+) site. Positions 471–545 (VREVFARQLM…LSRTLYQLYC (75 aa)) are helix-hairpin-helix (2HhH); involved in DNA recognition and bending.

It belongs to the XPF family. In terms of assembly, part of the heterodimeric DNA structure-specific endonuclease complex MUS81-EME1. Part of the heterodimeric DNA structure-specific endonuclease complex MUS81-EME2. Interacts with BLM; may stimulate the endonuclease activity of MUS81. Interacts with SLX4/BTBD12; this interaction is direct and links the MUS81-EME1 complex to SLX4, which may coordinate the action of the structure-specific endonuclease during DNA repair. Interacts with DCLRE1B/Apollo. Interacts with RECQL5; this interaction stimulates mitotic DNA synthesis. Interacts with CHEK2. Requires Mg(2+) as cofactor.

It is found in the nucleus. The protein localises to the nucleolus. Its function is as follows. Catalytic subunit of two functionally distinct, structure-specific, heterodimeric DNA endonucleases MUS81-EME1 and MUS81-EME2 that are involved in the maintenance of genome stability. Both endonucleases have essentially the same substrate specificity though MUS81-EME2 is more active than its MUS81-EME1 counterpart. Both cleave 3'-flaps and nicked Holliday junctions, and exhibit limited endonuclease activity with 5' flaps and nicked double-stranded DNAs. MUS81-EME2 which is active during the replication of DNA is more specifically involved in replication fork processing. Replication forks frequently encounter obstacles to their passage, including DNA base lesions, DNA interstrand cross-links, difficult-to-replicate sequences, transcription bubbles, or tightly bound proteins. One mechanism for the restart of a stalled replication fork involves nucleolytic cleavage mediated by the MUS81-EME2 endonuclease. By acting upon the stalled fork, MUS81-EME2 generates a DNA double-strand break (DSB) that can be repaired by homologous recombination, leading to the restoration of an active fork. MUS81-EME2 could also function in telomere maintenance. MUS81-EME1, on the other hand, is active later in the cell cycle and functions in the resolution of mitotic recombination intermediates including the Holliday junctions, the four-way DNA intermediates that form during homologous recombination. In Rattus norvegicus (Rat), this protein is Structure-specific endonuclease subunit MUS81.